Here is a 792-residue protein sequence, read N- to C-terminus: Cis-abienol synthase, chloroplastic (792 aa).

A chloroplast-targeting transit peptide spans 1–37 (MVLGLRSKIIPLPDHKLGNIKLGSVTNAICHRPCRVR). The Mg(2+) site is built by aspartate 539, aspartate 543, asparagine 684, and glutamate 692. The short motif at 539 to 543 (DDFFD) is the DDXXD motif element.

Belongs to the terpene synthase family. It depends on Mg(2+) as a cofactor. As to expression, expressed specifically in trichomes.

Its subcellular location is the plastid. It localises to the chloroplast. The enzyme catalyses 8-hydroxycopalyl diphosphate = cis-abienol + diphosphate. It functions in the pathway secondary metabolite biosynthesis; terpenoid biosynthesis. Involved in the biosynthesis of cis-abienol, a labdane diterpene that can be used as synthesis precursor of ambergris substitution fragance products. This chain is Cis-abienol synthase, chloroplastic, found in Nicotiana tabacum (Common tobacco).